Reading from the N-terminus, the 126-residue chain is S-adenosylmethionine decarboxylase proenzyme (126 aa).

The active-site Schiff-base intermediate with substrate; via pyruvic acid is S63. S63 bears the Pyruvic acid (Ser); by autocatalysis mark. The Proton acceptor; for processing activity role is filled by H68. Residue C83 is the Proton donor; for catalytic activity of the active site.

Belongs to the prokaryotic AdoMetDC family. Type 1 subfamily. As to quaternary structure, heterotetramer of two alpha and two beta chains arranged as a dimer of alpha/beta heterodimers. The cofactor is pyruvate. Is synthesized initially as an inactive proenzyme. Formation of the active enzyme involves a self-maturation process in which the active site pyruvoyl group is generated from an internal serine residue via an autocatalytic post-translational modification. Two non-identical subunits are generated from the proenzyme in this reaction, and the pyruvate is formed at the N-terminus of the alpha chain, which is derived from the carboxyl end of the proenzyme. The post-translation cleavage follows an unusual pathway, termed non-hydrolytic serinolysis, in which the side chain hydroxyl group of the serine supplies its oxygen atom to form the C-terminus of the beta chain, while the remainder of the serine residue undergoes an oxidative deamination to produce ammonia and the pyruvoyl group blocking the N-terminus of the alpha chain.

It catalyses the reaction S-adenosyl-L-methionine + H(+) = S-adenosyl 3-(methylsulfanyl)propylamine + CO2. Its pathway is amine and polyamine biosynthesis; S-adenosylmethioninamine biosynthesis; S-adenosylmethioninamine from S-adenosyl-L-methionine: step 1/1. Catalyzes the decarboxylation of S-adenosylmethionine to S-adenosylmethioninamine (dcAdoMet), the propylamine donor required for the synthesis of the polyamines spermine and spermidine from the diamine putrescine. This Oceanobacillus iheyensis (strain DSM 14371 / CIP 107618 / JCM 11309 / KCTC 3954 / HTE831) protein is S-adenosylmethionine decarboxylase proenzyme.